The chain runs to 90 residues: uncharacterized protein (90 aa).

Residue K88 forms an Isoglutamyl lysine isopeptide (Lys-Gln) (interchain with Q-Cter in protein Pup) linkage.

This is an uncharacterized protein from Mycolicibacterium smegmatis (strain ATCC 700084 / mc(2)155) (Mycobacterium smegmatis).